The sequence spans 415 residues: Serine/threonine transporter SstT (415 aa).

9 consecutive transmembrane segments (helical) span residues 21–41 (ILLG…AALA), 45–65 (LGTL…LMLV), 83–103 (ILFL…VLSV), 142–162 (ALLN…GLAF), 193–213 (LGIF…ALWG), 217–237 (LLMV…PLIV), 299–319 (MAGA…TLGI), 331–351 (VVAS…LLLI), and 358–378 (FGIS…IGVL).

This sequence belongs to the dicarboxylate/amino acid:cation symporter (DAACS) (TC 2.A.23) family.

It is found in the cell inner membrane. It carries out the reaction L-serine(in) + Na(+)(in) = L-serine(out) + Na(+)(out). It catalyses the reaction L-threonine(in) + Na(+)(in) = L-threonine(out) + Na(+)(out). Its function is as follows. Involved in the import of serine and threonine into the cell, with the concomitant import of sodium (symport system). The polypeptide is Serine/threonine transporter SstT (Pectobacterium carotovorum subsp. carotovorum (strain PC1)).